Consider the following 218-residue polypeptide: Small ribosomal subunit protein uS3 (218 aa).

In terms of domain architecture, KH type-2 spans 38-107 (VREYIEKRLK…RVHVNVVEVK (70 aa)).

The protein belongs to the universal ribosomal protein uS3 family. As to quaternary structure, part of the 30S ribosomal subunit. Forms a tight complex with proteins S10 and S14.

Binds the lower part of the 30S subunit head. Binds mRNA in the 70S ribosome, positioning it for translation. The protein is Small ribosomal subunit protein uS3 of Exiguobacterium sibiricum (strain DSM 17290 / CCUG 55495 / CIP 109462 / JCM 13490 / 255-15).